A 141-amino-acid chain; its full sequence is Nucleoside diphosphate kinase (141 aa).

ATP contacts are provided by lysine 11, phenylalanine 59, arginine 87, threonine 93, arginine 104, and asparagine 114. Catalysis depends on histidine 117, which acts as the Pros-phosphohistidine intermediate.

It belongs to the NDK family. In terms of assembly, homotetramer. Requires Mg(2+) as cofactor.

Its subcellular location is the cytoplasm. It carries out the reaction a 2'-deoxyribonucleoside 5'-diphosphate + ATP = a 2'-deoxyribonucleoside 5'-triphosphate + ADP. The catalysed reaction is a ribonucleoside 5'-diphosphate + ATP = a ribonucleoside 5'-triphosphate + ADP. Its function is as follows. Major role in the synthesis of nucleoside triphosphates other than ATP. The ATP gamma phosphate is transferred to the NDP beta phosphate via a ping-pong mechanism, using a phosphorylated active-site intermediate. In Neisseria gonorrhoeae (strain NCCP11945), this protein is Nucleoside diphosphate kinase.